Here is a 416-residue protein sequence, read N- to C-terminus: Serine hydroxymethyltransferase (416 aa).

(6S)-5,6,7,8-tetrahydrofolate contacts are provided by residues Leu121 and 125 to 127; that span reads GHL. The residue at position 229 (Lys229) is an N6-(pyridoxal phosphate)lysine.

Belongs to the SHMT family. In terms of assembly, homodimer. It depends on pyridoxal 5'-phosphate as a cofactor.

It is found in the cytoplasm. The catalysed reaction is (6R)-5,10-methylene-5,6,7,8-tetrahydrofolate + glycine + H2O = (6S)-5,6,7,8-tetrahydrofolate + L-serine. The protein operates within one-carbon metabolism; tetrahydrofolate interconversion. Its pathway is amino-acid biosynthesis; glycine biosynthesis; glycine from L-serine: step 1/1. Catalyzes the reversible interconversion of serine and glycine with tetrahydrofolate (THF) serving as the one-carbon carrier. This reaction serves as the major source of one-carbon groups required for the biosynthesis of purines, thymidylate, methionine, and other important biomolecules. Also exhibits THF-independent aldolase activity toward beta-hydroxyamino acids, producing glycine and aldehydes, via a retro-aldol mechanism. The protein is Serine hydroxymethyltransferase of Neisseria meningitidis serogroup C (strain 053442).